The chain runs to 166 residues: Sec-independent protein translocase protein TatB (166 aa).

Residues 2 to 22 (FDGIGFMELLLIGVLGLVVLG) form a helical membrane-spanning segment. Positions 69-166 (SKGLSNLSPE…DTRSNPKANG (98 aa)) are disordered. Polar residues-rich tracts occupy residues 88–97 (QAAQSVNRPY) and 112–132 (QIHS…SQAN). Positions 133–153 (PTATVEASPTSASPATPSEPS) are enriched in low complexity. A compositionally biased stretch (polar residues) spans 155-166 (GADTRSNPKANG).

It belongs to the TatB family. In terms of assembly, the Tat system comprises two distinct complexes: a TatABC complex, containing multiple copies of TatA, TatB and TatC subunits, and a separate TatA complex, containing only TatA subunits. Substrates initially bind to the TatABC complex, which probably triggers association of the separate TatA complex to form the active translocon.

Its subcellular location is the cell inner membrane. In terms of biological role, part of the twin-arginine translocation (Tat) system that transports large folded proteins containing a characteristic twin-arginine motif in their signal peptide across membranes. Together with TatC, TatB is part of a receptor directly interacting with Tat signal peptides. TatB may form an oligomeric binding site that transiently accommodates folded Tat precursor proteins before their translocation. This chain is Sec-independent protein translocase protein TatB, found in Shewanella baltica (strain OS223).